The chain runs to 824 residues: Leucine--tRNA ligase (824 aa).

The 'HIGH' region signature appears at 40 to 50 (PYPSGKIHMGH). The 'KMSKS' region signature appears at 580–584 (KMSKS). ATP is bound at residue lysine 583.

It belongs to the class-I aminoacyl-tRNA synthetase family.

It is found in the cytoplasm. The catalysed reaction is tRNA(Leu) + L-leucine + ATP = L-leucyl-tRNA(Leu) + AMP + diphosphate. The sequence is that of Leucine--tRNA ligase from Alkaliphilus metalliredigens (strain QYMF).